A 456-amino-acid polypeptide reads, in one-letter code: UDP-N-acetylmuramate--L-alanine ligase (456 aa).

118-124 contributes to the ATP binding site; that stretch reads GTHGKST.

The protein belongs to the MurCDEF family.

It is found in the cytoplasm. The catalysed reaction is UDP-N-acetyl-alpha-D-muramate + L-alanine + ATP = UDP-N-acetyl-alpha-D-muramoyl-L-alanine + ADP + phosphate + H(+). It participates in cell wall biogenesis; peptidoglycan biosynthesis. Its function is as follows. Cell wall formation. In Paenarthrobacter aurescens (strain TC1), this protein is UDP-N-acetylmuramate--L-alanine ligase.